The following is a 153-amino-acid chain: Interleukin-4 (153 aa).

A signal peptide spans 1-24 (MGLTSQLLPPLFFLLACAGNFVHG). 3 cysteine pairs are disulfide-bonded: cysteine 27/cysteine 151, cysteine 48/cysteine 89, and cysteine 70/cysteine 123. N-linked (GlcNAc...) asparagine glycosylation is present at asparagine 62.

The protein belongs to the IL-4/IL-13 family. In terms of assembly, interacts with IL4R. Interacts with IL13RA1.

It localises to the secreted. Functionally, cytokine secreted primarily by mast cells, T-cells, eosinophils, and basophils that plays a role in regulating antibody production, hematopoiesis and inflammation, and the development of effector T-cell responses. Induces the expression of class II MHC molecules on resting B-cells. Enhances both secretion and cell surface expression of IgE and IgG1. Also regulates the expression of the low affinity Fc receptor for IgE (CD23) on both lymphocytes and monocytes. Positively regulates IL31RA expression in macrophages. Stimulates autophagy in dendritic cells by interfering with mTORC1 signaling and through the induction of RUFY4. In addition, plays a critical role in higher functions of the normal brain, such as memory and learning. Upon binding to IL4, IL4R receptor dimerizes either with the common IL2R gamma chain/IL2RG to produce the type 1 signaling complex, located mainly on hematopoietic cells, or with the IL13RA1 to produce the type 2 complex, which is also expressed on nonhematopoietic cells. Engagement of both types of receptors initiates JAK3 and to a lower extend JAK1 phosphorylation leading to activation of the signal transducer and activator of transcription 6/STAT6. The protein is Interleukin-4 (IL4) of Homo sapiens (Human).